The chain runs to 426 residues: 3-phosphoshikimate 1-carboxyvinyltransferase (426 aa).

Residues Lys-21, Ser-22, and Arg-26 each coordinate 3-phosphoshikimate. Lys-21 contributes to the phosphoenolpyruvate binding site. Gly-93 and Arg-121 together coordinate phosphoenolpyruvate. 3-phosphoshikimate-binding residues include Ser-165, Gln-167, Asp-313, and Lys-340. Gln-167 contributes to the phosphoenolpyruvate binding site. Residue Asp-313 is the Proton acceptor of the active site. Phosphoenolpyruvate contacts are provided by Arg-344 and Arg-386.

This sequence belongs to the EPSP synthase family. As to quaternary structure, monomer.

The protein resides in the cytoplasm. It catalyses the reaction 3-phosphoshikimate + phosphoenolpyruvate = 5-O-(1-carboxyvinyl)-3-phosphoshikimate + phosphate. It participates in metabolic intermediate biosynthesis; chorismate biosynthesis; chorismate from D-erythrose 4-phosphate and phosphoenolpyruvate: step 6/7. Functionally, catalyzes the transfer of the enolpyruvyl moiety of phosphoenolpyruvate (PEP) to the 5-hydroxyl of shikimate-3-phosphate (S3P) to produce enolpyruvyl shikimate-3-phosphate and inorganic phosphate. This Solibacter usitatus (strain Ellin6076) protein is 3-phosphoshikimate 1-carboxyvinyltransferase.